The primary structure comprises 578 residues: SUMOylated effector protein AmpA (578 aa).

Residues 144-169 are disordered; that stretch reads PQTVDPSVVESATGSGVDTQEEQEID. 3 consecutive repeat copies span residues 180–272, 304–425, and 428–557. Residues 180-557 form a 3 X approximate tandem repeats region; the sequence is TEEQEVILEE…VEADAGMQQE (378 aa). The tract at residues 516–578 is disordered; that stretch reads VSVEADAGMQ…DPDDEDVLSY (63 aa).

Polysumoylated during infection on at least two lysine residues, in the N- and C-terminal section. SUMO2/3 modification of AmpA throughout the infection cycle is likely critical for bacterial intracellular survival, while terminal SUMO1 conjugation of AmpA may promote a late-stage infection cycle event. Only a small portion of the available AmpA pool is actually SUMOylated at any given time.

The protein localises to the secreted. The protein resides in the host membrane. It localises to the host cytoplasm. Its subcellular location is the host cytosol. Secreted effector that hijacks host cell SUMOylation during A.phagocytophilum infection and is important for the pathogen's intracellular survival. In Anaplasma phagocytophilum (strain HZ), this protein is SUMOylated effector protein AmpA.